The primary structure comprises 112 residues: MLRKLPINFAKWTVKKVPVQQKRFNSQQKEISPHIMFYKNYARPLGKVTLFALATYYGLEIVWWKLDASEQEAIKNSKLLICESSFSLLTFRRITEFRECEIKTRDLYDPEI.

A mitochondrion-targeting transit peptide spans Met1–Phe24. At Asn25–Pro44 the chain is on the mitochondrial matrix side. The helical transmembrane segment at Leu45–Val62 threads the bilayer. At Trp63–Ile112 the chain is on the mitochondrial intermembrane side.

The protein belongs to the INA17 family. In terms of assembly, component of the inner membrane assembly (INA) complex. Interacts with a subset of F(1)F(0)-ATP synthase subunits of the F(1)-domain and the peripheral stalk.

Its subcellular location is the mitochondrion inner membrane. In terms of biological role, component of the INA complex (INAC) that promotes the biogenesis of mitochondrial F(1)F(0)-ATP synthase. INAC facilitates the assembly of the peripheral stalk and promotes the assembly of the catalytic F(1)-domain with the membrane-embedded F(0)-domain. The protein is Inner membrane assembly complex subunit 17 of Schizosaccharomyces pombe (strain 972 / ATCC 24843) (Fission yeast).